Here is a 218-residue protein sequence, read N- to C-terminus: Cytochrome b6 (218 aa).

Residues 35-55 (IFYCLGGITLVCFLIQFATGF) form a helical membrane-spanning segment. Residue Cys-38 coordinates heme c. Positions 89 and 103 each coordinate heme b. The next 3 membrane-spanning stretches (helical) occupy residues 93 to 113 (ASMMVLMLILHVFRVYLTGGF), 119 to 139 (LTWVTGVVMAVITVAFGVTGY), and 189 to 209 (LHTFVLPWSLAVFMLMHFLMI). Heme b contacts are provided by His-190 and His-205.

The protein belongs to the cytochrome b family. PetB subfamily. The 4 large subunits of the cytochrome b6-f complex are cytochrome b6, subunit IV (17 kDa polypeptide, PetD), cytochrome f and the Rieske protein, while the 4 small subunits are PetG, PetL, PetM and PetN. The complex functions as a dimer. The cofactor is heme b. Heme c is required as a cofactor.

The protein resides in the cellular thylakoid membrane. Component of the cytochrome b6-f complex, which mediates electron transfer between photosystem II (PSII) and photosystem I (PSI), cyclic electron flow around PSI, and state transitions. This Prochlorococcus marinus subsp. pastoris (strain CCMP1986 / NIES-2087 / MED4) protein is Cytochrome b6.